A 160-amino-acid polypeptide reads, in one-letter code: Cytochrome b6-f complex subunit 4 (160 aa).

The next 3 membrane-spanning stretches (helical) occupy residues 36–56 (LLYIFPVCIFGTIACTVGLSV), 95–115 (LLGVLLMAGVPVGLLTVPFIE), and 131–151 (TVFLLGTVVAIWLGIGAALPI).

This sequence belongs to the cytochrome b family. PetD subfamily. The 4 large subunits of the cytochrome b6-f complex are cytochrome b6, subunit IV (17 kDa polypeptide, petD), cytochrome f and the Rieske protein, while the 4 small subunits are petG, petL, petM and petN. The complex functions as a dimer.

Its subcellular location is the plastid. It is found in the chloroplast thylakoid membrane. In terms of biological role, component of the cytochrome b6-f complex, which mediates electron transfer between photosystem II (PSII) and photosystem I (PSI), cyclic electron flow around PSI, and state transitions. This is Cytochrome b6-f complex subunit 4 from Chaetosphaeridium globosum (Charophycean green alga).